A 343-amino-acid chain; its full sequence is Phosphate acyltransferase (343 aa).

The protein belongs to the PlsX family. In terms of assembly, homodimer. Probably interacts with PlsY.

It is found in the cytoplasm. It catalyses the reaction a fatty acyl-[ACP] + phosphate = an acyl phosphate + holo-[ACP]. Its pathway is lipid metabolism; phospholipid metabolism. In terms of biological role, catalyzes the reversible formation of acyl-phosphate (acyl-PO(4)) from acyl-[acyl-carrier-protein] (acyl-ACP). This enzyme utilizes acyl-ACP as fatty acyl donor, but not acyl-CoA. The polypeptide is Phosphate acyltransferase (Coxiella burnetii (strain Dugway 5J108-111)).